Here is a 527-residue protein sequence, read N- to C-terminus: Glutamate--cysteine ligase (527 aa).

It belongs to the glutamate--cysteine ligase type 1 family. Type 1 subfamily.

The catalysed reaction is L-cysteine + L-glutamate + ATP = gamma-L-glutamyl-L-cysteine + ADP + phosphate + H(+). It functions in the pathway sulfur metabolism; glutathione biosynthesis; glutathione from L-cysteine and L-glutamate: step 1/2. This Bordetella parapertussis (strain 12822 / ATCC BAA-587 / NCTC 13253) protein is Glutamate--cysteine ligase.